A 221-amino-acid chain; its full sequence is Leucine rich adaptor protein 1-like (221 aa).

M1 is subject to N-acetylmethionine. Residues L24–S81 form a disordered region. Basic and acidic residues predominate over residues L28–A39. Positions S48–P75 are enriched in low complexity.

The sequence is that of Leucine rich adaptor protein 1-like (Lurap1l) from Mus musculus (Mouse).